A 122-amino-acid chain; its full sequence is Small ribosomal subunit protein uS13 (122 aa).

The segment at 94–122 (GLPVRGQVTQKNARTRKGPRKTVAGKKGK) is disordered. The span at 106 to 122 (ARTRKGPRKTVAGKKGK) shows a compositional bias: basic residues.

This sequence belongs to the universal ribosomal protein uS13 family. In terms of assembly, part of the 30S ribosomal subunit. Forms a loose heterodimer with protein S19. Forms two bridges to the 50S subunit in the 70S ribosome.

In terms of biological role, located at the top of the head of the 30S subunit, it contacts several helices of the 16S rRNA. In the 70S ribosome it contacts the 23S rRNA (bridge B1a) and protein L5 of the 50S subunit (bridge B1b), connecting the 2 subunits; these bridges are implicated in subunit movement. Contacts the tRNAs in the A and P-sites. The polypeptide is Small ribosomal subunit protein uS13 (Mycoplasma mobile (strain ATCC 43663 / 163K / NCTC 11711) (Mesomycoplasma mobile)).